The chain runs to 167 residues: uncharacterized protein (167 aa).

A compositionally biased stretch (basic residues) spans 1 to 10 (MPLRRCRAWR). The tract at residues 1–23 (MPLRRCRAWRGHSQPGTGSRSNE) is disordered.

This is an uncharacterized protein from Sinorhizobium fredii (strain NBRC 101917 / NGR234).